The primary structure comprises 472 residues: Ulvan lyase (472 aa).

Residues 1–21 (MIIKQYLLKISLCVLLLGCDS) form the signal peptide. 2 residues coordinate substrate: asparagine 46 and asparagine 109. Histidine 110 functions as the Proton donor in the catalytic mechanism. Substrate-binding residues include lysine 112 and histidine 130. Tyrosine 175 (proton acceptor) is an active-site residue. Substrate-binding residues include arginine 191, histidine 195, and tyrosine 233. Histidine 195 is a Zn(2+) binding site. 3 residues coordinate Zn(2+): histidine 251, cysteine 253, and histidine 265. Histidine 265 serves as a coordination point for substrate.

Belongs to the polysaccharide lyase 25 family.

Functionally, ulvan lyase involved in ulvan degradation. Ulvan is the main polysaccharide component of the Ulvales (green seaweed) cell wall. It is composed of disaccharide building blocks comprising 3-sulfated rhamnose (Rha3S) linked to D-glucuronic acid (GlcA), L-iduronic acid (IduA), or D-xylose (Xyl). Ulvan lyase catalyzes the endolytic cleavage of the glycosidic bond between Rha3S and the uronic acids GlcA or IduA, producing oligosaccharides that have unsaturated 4-deoxy-L-threo-hex-4-enopyranosiduronic acid (deltaUA) at the non-reducing end. This results eventually in the degradation of the ulvan polysaccharide into deltaUA-Rha3S disaccharides and deltaUA-Rha3S-Xyl-Rha3S tetrasaccharides. The chain is Ulvan lyase from Nonlabens ulvanivorans (Persicivirga ulvanivorans).